A 198-amino-acid chain; its full sequence is IMP cyclohydrolase (198 aa).

Belongs to the archaeal IMP cyclohydrolase family.

It carries out the reaction IMP + H2O = 5-formamido-1-(5-phospho-D-ribosyl)imidazole-4-carboxamide. The protein operates within purine metabolism; IMP biosynthesis via de novo pathway; IMP from 5-formamido-1-(5-phospho-D-ribosyl)imidazole-4-carboxamide: step 1/1. Catalyzes the cyclization of 5-formylamidoimidazole-4-carboxamide ribonucleotide to IMP. The polypeptide is IMP cyclohydrolase (Methanopyrus kandleri (strain AV19 / DSM 6324 / JCM 9639 / NBRC 100938)).